A 396-amino-acid chain; its full sequence is 1-deoxy-D-xylulose 5-phosphate reductoisomerase (396 aa).

Positions 13, 14, 15, 16, and 127 each coordinate NADPH. Lysine 128 contacts 1-deoxy-D-xylulose 5-phosphate. Position 129 (glutamate 129) interacts with NADPH. Mn(2+) is bound at residue aspartate 153. Residues serine 154, glutamate 155, serine 184, and histidine 207 each contribute to the 1-deoxy-D-xylulose 5-phosphate site. Glutamate 155 serves as a coordination point for Mn(2+). Glycine 213 serves as a coordination point for NADPH. 4 residues coordinate 1-deoxy-D-xylulose 5-phosphate: serine 220, asparagine 225, lysine 226, and glutamate 229. Glutamate 229 serves as a coordination point for Mn(2+).

Belongs to the DXR family. Mg(2+) is required as a cofactor. Mn(2+) serves as cofactor.

The catalysed reaction is 2-C-methyl-D-erythritol 4-phosphate + NADP(+) = 1-deoxy-D-xylulose 5-phosphate + NADPH + H(+). It functions in the pathway isoprenoid biosynthesis; isopentenyl diphosphate biosynthesis via DXP pathway; isopentenyl diphosphate from 1-deoxy-D-xylulose 5-phosphate: step 1/6. Its function is as follows. Catalyzes the NADPH-dependent rearrangement and reduction of 1-deoxy-D-xylulose-5-phosphate (DXP) to 2-C-methyl-D-erythritol 4-phosphate (MEP). In Pseudomonas aeruginosa (strain UCBPP-PA14), this protein is 1-deoxy-D-xylulose 5-phosphate reductoisomerase.